A 98-amino-acid polypeptide reads, in one-letter code: Large ribosomal subunit protein uL23 (98 aa).

It belongs to the universal ribosomal protein uL23 family. In terms of assembly, part of the 50S ribosomal subunit. Contacts protein L29, and trigger factor when it is bound to the ribosome.

In terms of biological role, one of the early assembly proteins it binds 23S rRNA. One of the proteins that surrounds the polypeptide exit tunnel on the outside of the ribosome. Forms the main docking site for trigger factor binding to the ribosome. This chain is Large ribosomal subunit protein uL23, found in Bordetella bronchiseptica (strain ATCC BAA-588 / NCTC 13252 / RB50) (Alcaligenes bronchisepticus).